We begin with the raw amino-acid sequence, 872 residues long: Alanine--tRNA ligase (872 aa).

4 residues coordinate Zn(2+): histidine 571, histidine 575, cysteine 674, and histidine 678.

The protein belongs to the class-II aminoacyl-tRNA synthetase family. Zn(2+) serves as cofactor.

It localises to the cytoplasm. The catalysed reaction is tRNA(Ala) + L-alanine + ATP = L-alanyl-tRNA(Ala) + AMP + diphosphate. In terms of biological role, catalyzes the attachment of alanine to tRNA(Ala) in a two-step reaction: alanine is first activated by ATP to form Ala-AMP and then transferred to the acceptor end of tRNA(Ala). Also edits incorrectly charged Ser-tRNA(Ala) and Gly-tRNA(Ala) via its editing domain. The polypeptide is Alanine--tRNA ligase (Symbiobacterium thermophilum (strain DSM 24528 / JCM 14929 / IAM 14863 / T)).